The following is a 168-amino-acid chain: DNA damage-inducible transcript 3 protein (168 aa).

The interaction with TRIB3 stretch occupies residues 10 to 18 (LETVSSWEL). The tract at residues 10–26 (LETVSSWELEAWYEDLQ) is N-terminal. A phosphoserine; by CK2 mark is found at Ser14, Ser15, Ser30, and Ser31. The span at 30-43 (SSDENGGPYSSSLG) shows a compositional bias: polar residues. A disordered region spans residues 30–168 (SSDENGGPYS…DRPHVNLQQV (139 aa)). A compositionally biased stretch (low complexity) spans 74–87 (SSSQSPRSPDSSQS). Phosphoserine; by MAPK14 occurs at positions 78 and 81. The bZIP domain maps to 98 to 161 (GRTRKRKQSG…EATRPGSDRP (64 aa)). The basic motif stretch occupies residues 101–129 (RKRKQSGQCPARGTGKQRMKEKEQENERK). Positions 118 to 162 (RMKEKEQENERKVAQLAEENERLKQEIERLTREVEATRPGSDRPH) are enriched in basic and acidic residues. The leucine-zipper stretch occupies residues 133–147 (LAEENERLKQEIERL).

Belongs to the bZIP family. Heterodimer. Interacts with TCF7L2/TCF4, EP300/P300, HDAC1, HDAC5 and HDAC6. Interacts with TRIB3 which blocks its association with EP300/P300. Interacts with FOXO3, CEBPB and ATF4. Ubiquitinated, leading to its degradation by the proteasome. In terms of processing, phosphorylation at serine residues by MAPK14 enhances its transcriptional activation activity while phosphorylation at serine residues by CK2 inhibits its transcriptional activation activity.

The protein resides in the cytoplasm. The protein localises to the nucleus. Its function is as follows. Multifunctional transcription factor in ER stress response. Plays an essential role in the response to a wide variety of cell stresses and induces cell cycle arrest and apoptosis in response to ER stress. Plays a dual role both as an inhibitor of CCAAT/enhancer-binding protein (C/EBP) function and as an activator of other genes. Acts as a dominant-negative regulator of C/EBP-induced transcription: dimerizes with members of the C/EBP family, impairs their association with C/EBP binding sites in the promoter regions, and inhibits the expression of C/EBP regulated genes. Positively regulates the transcription of TRIB3, IL6, IL8, IL23, TNFRSF10B/DR5, PPP1R15A/GADD34, BBC3/PUMA, BCL2L11/BIM and ERO1L. Negatively regulates; expression of BCL2 and MYOD1, ATF4-dependent transcriptional activation of asparagine synthetase (ASNS), CEBPA-dependent transcriptional activation of hepcidin (HAMP) and CEBPB-mediated expression of peroxisome proliferator-activated receptor gamma (PPARG). Inhibits the canonical Wnt signaling pathway by binding to TCF7L2/TCF4, impairing its DNA-binding properties and repressing its transcriptional activity. Plays a regulatory role in the inflammatory response through the induction of caspase-11 (CASP4/CASP11) which induces the activation of caspase-1 (CASP1) and both these caspases increase the activation of pro-IL1B to mature IL1B which is involved in the inflammatory response. The protein is DNA damage-inducible transcript 3 protein (DDIT3) of Cricetulus griseus (Chinese hamster).